The chain runs to 239 residues: Uridylate kinase (239 aa).

ATP is bound at residue 13 to 16 (KLSG). Gly-55 is a binding site for UMP. Residues Gly-56 and Arg-60 each coordinate ATP. UMP is bound by residues Asp-75 and 136 to 143 (TGNPFFTT). Thr-163, Tyr-169, and Asp-172 together coordinate ATP.

Belongs to the UMP kinase family. As to quaternary structure, homohexamer.

The protein resides in the cytoplasm. It catalyses the reaction UMP + ATP = UDP + ADP. Its pathway is pyrimidine metabolism; CTP biosynthesis via de novo pathway; UDP from UMP (UMPK route): step 1/1. With respect to regulation, inhibited by UTP. Its function is as follows. Catalyzes the reversible phosphorylation of UMP to UDP. The sequence is that of Uridylate kinase from Chromobacterium violaceum (strain ATCC 12472 / DSM 30191 / JCM 1249 / CCUG 213 / NBRC 12614 / NCIMB 9131 / NCTC 9757 / MK).